Here is a 201-residue protein sequence, read N- to C-terminus: Proteasome subunit beta type-2 (201 aa).

Met-1 carries the post-translational modification N-acetylmethionine.

Belongs to the peptidase T1B family. As to quaternary structure, the 26S proteasome consists of a 20S proteasome core and two 19S regulatory subunits. The 20S proteasome core is a barrel-shaped complex made of 28 subunits that are arranged in four stacked rings. The two outer rings are each formed by seven alpha subunits, and the two inner rings are formed by seven beta subunits. The proteolytic activity is exerted by three beta-subunits PSMB5, PSMB6 and PSMB7. As to expression, detected in liver (at protein level).

It localises to the cytoplasm. It is found in the nucleus. Its function is as follows. Non-catalytic component of the 20S core proteasome complex involved in the proteolytic degradation of most intracellular proteins. This complex plays numerous essential roles within the cell by associating with different regulatory particles. Associated with two 19S regulatory particles, forms the 26S proteasome and thus participates in the ATP-dependent degradation of ubiquitinated proteins. The 26S proteasome plays a key role in the maintenance of protein homeostasis by removing misfolded or damaged proteins that could impair cellular functions, and by removing proteins whose functions are no longer required. Associated with the PA200 or PA28, the 20S proteasome mediates ubiquitin-independent protein degradation. This type of proteolysis is required in several pathways including spermatogenesis (20S-PA200 complex) or generation of a subset of MHC class I-presented antigenic peptides (20S-PA28 complex). In Mus musculus (Mouse), this protein is Proteasome subunit beta type-2 (Psmb2).